The following is a 500-amino-acid chain: 2-isopropylmalate synthase (500 aa).

The region spanning 5–266 (LFIFDTTLRD…ITNITTNKIY (262 aa)) is the Pyruvate carboxyltransferase domain. Residues Asp14, His202, His204, and Asn238 each coordinate Mn(2+). Positions 389-500 (KLEYLQVTSG…VDAINKFIVD (112 aa)) are regulatory domain.

It belongs to the alpha-IPM synthase/homocitrate synthase family. LeuA type 1 subfamily. In terms of assembly, homodimer. Mn(2+) is required as a cofactor.

Its subcellular location is the cytoplasm. The enzyme catalyses 3-methyl-2-oxobutanoate + acetyl-CoA + H2O = (2S)-2-isopropylmalate + CoA + H(+). It functions in the pathway amino-acid biosynthesis; L-leucine biosynthesis; L-leucine from 3-methyl-2-oxobutanoate: step 1/4. In terms of biological role, catalyzes the condensation of the acetyl group of acetyl-CoA with 3-methyl-2-oxobutanoate (2-ketoisovalerate) to form 3-carboxy-3-hydroxy-4-methylpentanoate (2-isopropylmalate). This is 2-isopropylmalate synthase from Parabacteroides distasonis (strain ATCC 8503 / DSM 20701 / CIP 104284 / JCM 5825 / NCTC 11152).